The sequence spans 172 residues: Large ribosomal subunit protein uL10 (172 aa).

It belongs to the universal ribosomal protein uL10 family. In terms of assembly, part of the ribosomal stalk of the 50S ribosomal subunit. The N-terminus interacts with L11 and the large rRNA to form the base of the stalk. The C-terminus forms an elongated spine to which L12 dimers bind in a sequential fashion forming a multimeric L10(L12)X complex.

In terms of biological role, forms part of the ribosomal stalk, playing a central role in the interaction of the ribosome with GTP-bound translation factors. This Syntrophotalea carbinolica (strain DSM 2380 / NBRC 103641 / GraBd1) (Pelobacter carbinolicus) protein is Large ribosomal subunit protein uL10.